The sequence spans 358 residues: 2'-5'-oligoadenylate synthase 1A (358 aa).

The interval 14-61 is interaction with dsRNA; that stretch reads DKFIEVYLLPNTSFRDDVKSAINVLCDFLKERCFRDTVHPVRVSKVVK. Ser-64 contacts ATP. Mg(2+)-binding residues include Asp-76, Asp-78, and Asp-149. The interaction with dsRNA stretch occupies residues 201–211; it reads QRPTKLKSLIR. ATP is bound by residues Arg-211, Lys-214, and Gln-231.

It belongs to the 2-5A synthase family. As to quaternary structure, monomer. Homotetramer. Interacts with OAS1D. Mg(2+) serves as cofactor.

Its subcellular location is the cytoplasm. The protein localises to the mitochondrion. The protein resides in the nucleus. It localises to the microsome. It is found in the endoplasmic reticulum. It catalyses the reaction 3 ATP = 5'-triphosphoadenylyl-(2'-&gt;5')-adenylyl-(2'-&gt;5')-adenosine + 2 diphosphate. With respect to regulation, produced as a latent enzyme which is activated by dsRNA generated during the course of viral infection. The dsRNA activator must be at least 15 nucleotides long, and no modification of the 2'-hydroxyl group is tolerated. ssRNA or dsDNA do not act as activators. Interferon-induced, dsRNA-activated antiviral enzyme which plays a critical role in cellular innate antiviral response. In addition, it may also play a role in other cellular processes such as apoptosis, cell growth, differentiation and gene regulation. Synthesizes higher oligomers of 2'-5'-oligoadenylates (2-5A) from ATP which then bind to the inactive monomeric form of ribonuclease L (RNase L) leading to its dimerization and subsequent activation. Activation of RNase L leads to degradation of cellular as well as viral RNA, resulting in the inhibition of protein synthesis, thus terminating viral replication. Can mediate the antiviral effect via the classical RNase L-dependent pathway or an alternative antiviral pathway independent of RNase L. The chain is 2'-5'-oligoadenylate synthase 1A (Oas1a) from Rattus norvegicus (Rat).